Consider the following 487-residue polypeptide: MNEILKKSYVELKDSLNSGKISSTELVSACINRIREVDGAVKAFLYLDEKKVLNSAEESDKRRKEGKPLSEFDGMPVAIKDNICIRDTITSCSSKILENYKSPFHATVVEKLLEKGFILFPRTNMDEFAMGSSTENSAFQTTRNPFDLERIPGGSSGGSAAAVAASMVPLALGSDTGGSVRQPASLCGLYGLKPTYGTVSRYGLVAYASSLDQIGPFSRELQGCIDLYSVISGKDVRDSTSIHRPKFSASDVQPQDFKGLKVGVIKMTPEIQSEVVKSYDKVLNQLKEKGATLVDLDFSKFGFAIPIYYIIATAECSSNLSRFDGIRFGSRKDKTGKLEDLFVDSRTEGFGPEVKRRILLGTFSLSAGYYDAYYGTAQKARALIRKEYESFFSKVDCILQPTSPTTAFKIGEKTKDPIQMYKADIWTTSVNLAGLPAMSVPMGADQKGLPIGLQITTPHFQEGKLFGIALALSTLEGMNIQFPESIK.

Catalysis depends on charge relay system residues Lys-80 and Ser-155. Catalysis depends on Ser-179, which acts as the Acyl-ester intermediate.

The protein belongs to the amidase family. GatA subfamily. In terms of assembly, heterotrimer of A, B and C subunits.

It catalyses the reaction L-glutamyl-tRNA(Gln) + L-glutamine + ATP + H2O = L-glutaminyl-tRNA(Gln) + L-glutamate + ADP + phosphate + H(+). Its function is as follows. Allows the formation of correctly charged Gln-tRNA(Gln) through the transamidation of misacylated Glu-tRNA(Gln) in organisms which lack glutaminyl-tRNA synthetase. The reaction takes place in the presence of glutamine and ATP through an activated gamma-phospho-Glu-tRNA(Gln). This is Glutamyl-tRNA(Gln) amidotransferase subunit A from Leptospira interrogans serogroup Icterohaemorrhagiae serovar Lai (strain 56601).